We begin with the raw amino-acid sequence, 253 residues long: Glucosamine-6-phosphate deaminase (253 aa).

Asp65 (proton acceptor; for enolization step) is an active-site residue. The active-site For ring-opening step is Asn133. The Proton acceptor; for ring-opening step role is filled by His135. The For ring-opening step role is filled by Glu140.

This sequence belongs to the glucosamine/galactosamine-6-phosphate isomerase family. NagB subfamily.

It carries out the reaction alpha-D-glucosamine 6-phosphate + H2O = beta-D-fructose 6-phosphate + NH4(+). It functions in the pathway amino-sugar metabolism; N-acetylneuraminate degradation; D-fructose 6-phosphate from N-acetylneuraminate: step 5/5. Catalyzes the reversible isomerization-deamination of glucosamine 6-phosphate (GlcN6P) to form fructose 6-phosphate (Fru6P) and ammonium ion. The protein is Glucosamine-6-phosphate deaminase of Corynebacterium efficiens (strain DSM 44549 / YS-314 / AJ 12310 / JCM 11189 / NBRC 100395).